A 256-amino-acid chain; its full sequence is Protein FixA (256 aa).

This sequence belongs to the ETF beta-subunit/FixA family. Heterodimer of FixA and FixB.

It functions in the pathway amine and polyamine metabolism; carnitine metabolism. Its function is as follows. Required for anaerobic carnitine reduction. May bring reductant to CaiA. The polypeptide is Protein FixA (Shigella flexneri serotype 5b (strain 8401)).